Consider the following 205-residue polypeptide: Holliday junction branch migration complex subunit RuvA (205 aa).

Residues 1–64 are domain I; it reads MIGKLKGLID…EDQIKLFGFR (64 aa). Residues 65–143 form a domain II region; it reads TDHEREWFRL…ALSNVDPAVV (79 aa). The flexible linker stretch occupies residues 144 to 154; the sequence is QLSGALDDNRA. A domain III region spans residues 154-205; the sequence is APRPVTDAISALVNLGYGQPQAAAAIAAAARAAGDDAATAQLIKLGLKELSK.

Belongs to the RuvA family. Homotetramer. Forms an RuvA(8)-RuvB(12)-Holliday junction (HJ) complex. HJ DNA is sandwiched between 2 RuvA tetramers; dsDNA enters through RuvA and exits via RuvB. An RuvB hexamer assembles on each DNA strand where it exits the tetramer. Each RuvB hexamer is contacted by two RuvA subunits (via domain III) on 2 adjacent RuvB subunits; this complex drives branch migration. In the full resolvosome a probable DNA-RuvA(4)-RuvB(12)-RuvC(2) complex forms which resolves the HJ.

It is found in the cytoplasm. In terms of biological role, the RuvA-RuvB-RuvC complex processes Holliday junction (HJ) DNA during genetic recombination and DNA repair, while the RuvA-RuvB complex plays an important role in the rescue of blocked DNA replication forks via replication fork reversal (RFR). RuvA specifically binds to HJ cruciform DNA, conferring on it an open structure. The RuvB hexamer acts as an ATP-dependent pump, pulling dsDNA into and through the RuvAB complex. HJ branch migration allows RuvC to scan DNA until it finds its consensus sequence, where it cleaves and resolves the cruciform DNA. The sequence is that of Holliday junction branch migration complex subunit RuvA from Rhodopseudomonas palustris (strain BisB5).